A 261-amino-acid polypeptide reads, in one-letter code: Serine/arginine-rich splicing factor 12 (261 aa).

Residues 10-88 (TSLFIRNVAD…RQIEIQFAQG (79 aa)) enclose the RRM domain. A disordered region spans residues 86 to 261 (AQGDRKTPGQ…SRSYRHKNSW (176 aa)). Positions 88 to 109 (GDRKTPGQMKSKERHPCSPSDH) are enriched in basic and acidic residues. Composition is skewed to basic residues over residues 110 to 122 (RRSR…RTRS) and 178 to 191 (GRSR…RSKS). Residues 192–209 (IGKSQSSSPQKQTSSGTK) are compositionally biased toward low complexity. The segment covering 230 to 239 (GYTNSETKVQ) has biased composition (polar residues). A compositionally biased stretch (basic residues) spans 240-261 (TAKHSHFRSHSRSRSYRHKNSW).

It belongs to the splicing factor SR family. Expressed in testis.

The protein localises to the nucleus. Functionally, splicing factor that seems to antagonize SR proteins in pre-mRNA splicing regulation. The protein is Serine/arginine-rich splicing factor 12 (SRSF12) of Homo sapiens (Human).